Here is an 882-residue protein sequence, read N- to C-terminus: Valine--tRNA ligase (882 aa).

Positions Pro45 to His55 match the 'HIGH' region motif. The 'KMSKS' region motif lies at Lys525–Ser529. Lys528 lines the ATP pocket. Positions Glu812–Ala881 form a coiled coil.

It belongs to the class-I aminoacyl-tRNA synthetase family. ValS type 1 subfamily. Monomer.

Its subcellular location is the cytoplasm. It catalyses the reaction tRNA(Val) + L-valine + ATP = L-valyl-tRNA(Val) + AMP + diphosphate. Functionally, catalyzes the attachment of valine to tRNA(Val). As ValRS can inadvertently accommodate and process structurally similar amino acids such as threonine, to avoid such errors, it has a 'posttransfer' editing activity that hydrolyzes mischarged Thr-tRNA(Val) in a tRNA-dependent manner. The sequence is that of Valine--tRNA ligase from Leptospira interrogans serogroup Icterohaemorrhagiae serovar copenhageni (strain Fiocruz L1-130).